Here is a 145-residue protein sequence, read N- to C-terminus: Large ribosomal subunit protein uL13 (145 aa).

Residues 72–91 (DKMYHRHSNHPGGLKSISAG) are disordered.

The protein belongs to the universal ribosomal protein uL13 family. In terms of assembly, part of the 50S ribosomal subunit.

Functionally, this protein is one of the early assembly proteins of the 50S ribosomal subunit, although it is not seen to bind rRNA by itself. It is important during the early stages of 50S assembly. In Staphylococcus epidermidis (strain ATCC 12228 / FDA PCI 1200), this protein is Large ribosomal subunit protein uL13.